A 465-amino-acid chain; its full sequence is Putative F-box/LRR-repeat protein At3g28410 (465 aa).

One can recognise an F-box domain in the interval 27–73; sequence ADFINYMPDDILHHILSFIPTDLAMRTSVLSRRWRHVWCETPCLDIK. LRR repeat units lie at residues 127–155, 178–203, 207–225, 278–302, 332–357, 402–427, and 447–465; these read VRDFTYTKTYRFPDIFYISSSLKQLDVTL, FCQIPDESMHNILSGCPILESLTLDT, LERLDLSKSPNLRRLDINR, ADRYQTMALEMLSKFHNVKRLTVGE, FVRSVIPGISRLLQNSPGLKKLTLHT, TSKLVASFMNLVLRNAKTLERMVVWL, and VETLSHNNNVSILLKQSNC.

In Arabidopsis thaliana (Mouse-ear cress), this protein is Putative F-box/LRR-repeat protein At3g28410.